The primary structure comprises 343 residues: Galactoside alpha-(1,2)-fucosyltransferase 2 (343 aa).

At 1 to 14 (MLVVQMPFSFPVAH) the chain is on the cytoplasmic side. A helical; Signal-anchor for type II membrane protein transmembrane segment spans residues 15-28 (FILFVFTVSTIFHI). At 29–343 (QQRLAKIQAM…AADLSPLLKH (315 aa)) the chain is on the lumenal side. Residues N188, N282, and N308 are each glycosylated (N-linked (GlcNAc...) asparagine).

This sequence belongs to the glycosyltransferase 11 family.

Its subcellular location is the golgi apparatus. It is found in the golgi stack membrane. It carries out the reaction a beta-D-galactosyl-(1-&gt;3)-N-acetyl-beta-D-glucosaminyl derivative + GDP-beta-L-fucose = an alpha-L-Fuc-(1-&gt;2)-beta-D-Gal-(1-&gt;3)-beta-D-GlcNAc derivative + GDP + H(+). It catalyses the reaction a beta-D-galactosyl-(1-&gt;4)-N-acetyl-beta-D-glucosaminyl derivative + GDP-beta-L-fucose = an alpha-L-Fuc-(1-&gt;2)-beta-D-Gal-(1-&gt;4)-beta-D-GlcNAc derivative + GDP + H(+). The enzyme catalyses a neolactoside nLc4Cer + GDP-beta-L-fucose = a neolactoside IV(2)-alpha-Fuc-nLc4Cer + GDP + H(+). The catalysed reaction is a neolactoside nLc4Cer(d18:1(4E)) + GDP-beta-L-fucose = a neolactoside IV(2)-alpha-Fuc-nLc4Cer(d18:1(4E)) + GDP + H(+). It carries out the reaction a ganglioside GM1 + GDP-beta-L-fucose = a ganglioside Fuc-GM1 + GDP + H(+). It catalyses the reaction a ganglioside GA1 + GDP-beta-L-fucose = a ganglioside Fuc-GA1 + GDP + H(+). The enzyme catalyses Lc4Cer + GDP-beta-L-fucose = alpha-L-fucosyl-(1-&gt;2)-beta-D-galactosyl-(1-&gt;3)-N-acetyl-beta-D-glucosaminyl-(1-&gt;3)-beta-D-galactosyl-(1-&gt;4)-beta-D-glucosyl-(1&lt;-&gt;1')-ceramide + GDP + H(+). The catalysed reaction is a beta-D-Gal-(1-&gt;3)-beta-D-GlcNAc-(1-&gt;3)-beta-D-Gal-(1-&gt;4)-beta-D-Glc-(1&lt;-&gt;1')-Cer(d18:1(4E)) + GDP-beta-L-fucose = alpha-L-fucosyl-(1-&gt;2)- beta-D-galactosyl-(1-&gt;3)-N-acetyl-beta-D-glucosaminyl-(1-&gt;3)-beta-D-galactosyl-(1-&gt;4)-beta-D-glucosyl-(1&lt;-&gt;1')-N-acylsphing-4-enine + GDP + H(+). It carries out the reaction a ganglioside GD1b + GDP-beta-L-fucose = a ganglioside Fuc-GD1b + GDP + H(+). It catalyses the reaction a ganglioside GM1 (d18:1(4E)) + GDP-beta-L-fucose = a ganglioside Fuc-GM1 (d18:1(4E)) + GDP + H(+). The enzyme catalyses a globoside GalGb4Cer (d18:1(4E)) + GDP-beta-L-fucose = a globoside Globo-H (d18:1(4E)) + GDP + H(+). The catalysed reaction is a lactoside III(4)-a-Fuc-Lc4Cer + GDP-beta-L-fucose = a lactoside IV(2),III(4)-a-[Fuc]2-Lc4Cer + GDP + H(+). It carries out the reaction beta-D-galactosyl-(1-&gt;3)-N-acetyl-D-galactosamine + GDP-beta-L-fucose = alpha-L-fucosyl-(1-&gt;2)-beta-D-galactosyl-(1-&gt;3)-N-acetyl-D-galactosamine + GDP + H(+). It functions in the pathway protein modification; protein glycosylation. Functionally, catalyzes the transfer of L-fucose, from a guanosine diphosphate-beta-L-fucose, to the terminal galactose on both O- and N-linked glycans chains of cell surface glycoproteins and glycolipids and the resulting epitope regulates several processes such as cell-cell interaction including host-microbe interaction, cell surface expression and cell proliferation. Preferentially fucosylates gangliosides GA1 and GM1 in the antrum, cecum and colon and in the female reproductive organs. Fucosylated host glycoproteins or glycolipids mediate interaction with intestinal microbiota influencing its composition. Creates a soluble precursor oligosaccharide FuC-alpha ((1,2)Galbeta-) called the H antigen which is an essential substrate for the final step in the soluble ABO blood group antigen synthesis pathway. The polypeptide is Galactoside alpha-(1,2)-fucosyltransferase 2 (Pongo pygmaeus (Bornean orangutan)).